A 474-amino-acid chain; its full sequence is PTS system N-acetylmuramic acid-specific EIIBC component (474 aa).

The region spanning 1–89 is the PTS EIIB type-1 domain; sequence MAKEISSELL…SELLGEAPVQ (89 aa). The Cytoplasmic segment spans residues 1–123; it reads MAKEISSELL…LAKFATIFTP (123 aa). Cys29 functions as the Phosphocysteine intermediate; for EIIB activity in the catalytic mechanism. In terms of domain architecture, PTS EIIC type-1 spans 115-474; it reads AKFATIFTPL…LFGCRNVNLD (360 aa). The helical transmembrane segment at 124 to 144 threads the bilayer; the sequence is LIPGFIAAGLLLGIATLIATV. Topologically, residues 145 to 157 are periplasmic; the sequence is MHVPADAQGTLPD. A helical membrane pass occupies residues 158–178; that stretch reads ALNFMKVFSKGLFTFLVILVG. The Cytoplasmic segment spans residues 179–180; the sequence is YN. A helical membrane pass occupies residues 181–201; that stretch reads AAQAFGGTGVNGAIIAALFLL. Over 202-217 the chain is Periplasmic; it reads GYNPAATTGYYAGFHD. A helical transmembrane segment spans residues 218 to 238; the sequence is FFGLPIDPRGNIIGVLIAAWA. At 239-260 the chain is on the cytoplasmic side; sequence CARIEGMVRRFMPDDLDMLLTS. Residues 261–281 form a helical membrane-spanning segment; that stretch reads LITLLITATLAYLIIMPLGGW. The Periplasmic segment spans residues 282–301; that stretch reads LFEGMSWLFMHLNSNPLGCA. A helical transmembrane segment spans residues 302–322; that stretch reads VLAGLFLIAVVFGVHQGFIPV. Residues 323–334 are Cytoplasmic-facing; that stretch reads YLALMDSQGFNS. The chain crosses the membrane as a helical span at residues 335–355; that stretch reads LFPILSMAGAGQVGAALALYW. Residues 356-368 lie on the Periplasmic side of the membrane; sequence RAQPHSGLRSQVR. Residues 369–389 form a helical membrane-spanning segment; sequence GAIIPGLLGVGEPLIYGVTLP. The Cytoplasmic segment spans residues 390 to 393; sequence RMKP. The chain crosses the membrane as a helical span at residues 394–414; it reads FITACLGGAAGGLFIGLIAWW. At 415–440 the chain is on the periplasmic side; sequence GLPMGLNSAFGPSGLVALPLMTSAQG. A helical membrane pass occupies residues 441–461; it reads ILPAMAIYAGGILVAWVCGFI. Over 462–474 the chain is Cytoplasmic; the sequence is FTTLFGCRNVNLD.

The protein localises to the cell inner membrane. It carries out the reaction N-acetyl-beta-D-muramate(out) + N(pros)-phospho-L-histidyl-[protein] = N-acetyl-beta-D-muramate 6-phosphate(in) + L-histidyl-[protein]. In terms of biological role, the phosphoenolpyruvate-dependent sugar phosphotransferase system (sugar PTS), a major carbohydrate active transport system, catalyzes the phosphorylation of incoming sugar substrates concomitantly with their translocation across the cell membrane. This system is involved in N-acetylmuramic acid (MurNAc) transport, yielding cytoplasmic MurNAc-6-P. Is also able to take up anhydro-N-acetylmuramic acid (anhMurNAc), but cannot phosphorylate the carbon 6, probably because of the 1,6-anhydro ring. The sequence is that of PTS system N-acetylmuramic acid-specific EIIBC component (murP) from Shigella dysenteriae serotype 1 (strain Sd197).